The primary structure comprises 367 residues: Phosphoribosylaminoimidazole-succinocarboxamide synthase (367 aa).

It belongs to the SAICAR synthetase family.

The catalysed reaction is 5-amino-1-(5-phospho-D-ribosyl)imidazole-4-carboxylate + L-aspartate + ATP = (2S)-2-[5-amino-1-(5-phospho-beta-D-ribosyl)imidazole-4-carboxamido]succinate + ADP + phosphate + 2 H(+). The protein operates within purine metabolism; IMP biosynthesis via de novo pathway; 5-amino-1-(5-phospho-D-ribosyl)imidazole-4-carboxamide from 5-amino-1-(5-phospho-D-ribosyl)imidazole-4-carboxylate: step 1/2. The chain is Phosphoribosylaminoimidazole-succinocarboxamide synthase from Vibrio vulnificus (strain CMCP6).